The sequence spans 328 residues: Sin3 histone deacetylase corepressor complex component SDS3 (328 aa).

The span at 1–16 (MSAAGLLAPAPAQAGA) shows a compositional bias: low complexity. Residues 1–65 (MSAAGLLAPA…DLAKHDEEDY (65 aa)) form a disordered region. Ser-2 is subject to N-acetylserine. Positions 2-170 (SAAGLLAPAP…IENEKLTMEL (169 aa)) are mediates interaction with USP17L2. Acidic residues-rich tracts occupy residues 23–37 (YPEE…EEDE) and 45–54 (SDEDTEDASE). Phosphoserine occurs at positions 32 and 45. Position 49 is a phosphothreonine (Thr-49). At Ser-53 the chain carries Phosphoserine. Basic and acidic residues predominate over residues 56 to 65 (DLAKHDEEDY). Residues 66 to 171 (VEMKEQMYQD…ENEKLTMELT (106 aa)) adopt a coiled-coil conformation. Glycyl lysine isopeptide (Lys-Gly) (interchain with G-Cter in SUMO2) cross-links involve residues Lys-69, Lys-178, and Lys-201. The tract at residues 188–226 (RPNDPVPIPDKRRKPAPAQLNYLLTDEQIMEDLRTLNKL) is sin3 interaction domain (SID). Residues 226–252 (LKSPKRPASPSSPEHLPATPAESPAQR) are disordered. 3 positions are modified to phosphoserine: Ser-228, Ser-234, and Ser-237. Residue Thr-244 is modified to Phosphothreonine.

It belongs to the SDS3 family. As to quaternary structure, interacts with HCFC1. Homodimer. Component of the SIN3 histone deacetylase (HDAC) corepressor complex. Interacts with SIN3A. Interaction with SIN3B enhances the interaction between SIN3B and HDAC1 to form a complex. Component of a mSin3A corepressor complex that contains SIN3A, SAP130, SUDS3/SAP45, ARID4B/SAP180, HDAC1 and HDAC2. Interacts with USP17L2; the interaction is direct. Interacts with FOXK2. In terms of processing, polyubiquitinated. 'Lys-63'-polyubiquitinated SUDS3 positively regulates histone deacetylation. Regulated through deubiquitination by USP17L2/USP17 that cleaves 'Lys-63'-linked ubiquitin chains.

Its subcellular location is the nucleus. Its function is as follows. Regulatory protein which represses transcription and augments histone deacetylase activity of HDAC1. May have a potential role in tumor suppressor pathways through regulation of apoptosis. May function in the assembly and/or enzymatic activity of the mSin3A corepressor complex or in mediating interactions between the complex and other regulatory complexes. This chain is Sin3 histone deacetylase corepressor complex component SDS3 (SUDS3), found in Pongo abelii (Sumatran orangutan).